The chain runs to 212 residues: MSEPNLPAGVERREIGGETRLATRGPPVYGEPTADGWRAWDPGRSKLGGMFELGFETGLSGGETVLYLGAASGTTVSHVADFAGPTYAVEFAPRPARDLVEAAEPRDRLFPLLKDARTPKRYAHVVESDVDAIVQDVATRGQAEVAVRNARFLADDGRLLLAIKARSEDVTVEPETVFEGALDRLRETYEILETQRLDRFHEDHLGVVATPK.

Residues methionine 1–tryptophan 37 form a disordered region. S-adenosyl-L-methionine contacts are provided by residues threonine 74 to threonine 75, glutamate 90 to phenylalanine 91, aspartate 115 to alanine 116, and aspartate 136 to threonine 139.

The protein belongs to the methyltransferase superfamily. Fibrillarin family. Interacts with nop5. Component of box C/D small ribonucleoprotein (sRNP) particles that contain rpl7ae, FlpA and nop5, plus a guide RNA.

Functionally, involved in pre-rRNA and tRNA processing. Utilizes the methyl donor S-adenosyl-L-methionine to catalyze the site-specific 2'-hydroxyl methylation of ribose moieties in rRNA and tRNA. Site specificity is provided by a guide RNA that base pairs with the substrate. Methylation occurs at a characteristic distance from the sequence involved in base pairing with the guide RNA. This is Fibrillarin-like rRNA/tRNA 2'-O-methyltransferase from Halorubrum lacusprofundi (strain ATCC 49239 / DSM 5036 / JCM 8891 / ACAM 34).